The chain runs to 2185 residues: Genome polyprotein (2185 aa).

A lipid anchor (N-myristoyl glycine; by host) is attached at Gly2. Over 2 to 1495 the chain is Cytoplasmic; it reads GAQVSTQKTG…HVNRAFICLQ (1494 aa). Residues 566-582 are amphipathic alpha-helix; it reads FFQGPPGEVVERAIARV. Catalysis depends on for protease 2A activity residues His872 and Asp890. 2 residues coordinate Zn(2+): Cys907 and Cys909. Residue Cys961 is the For protease 2A activity of the active site. Cys967 and His969 together coordinate Zn(2+). A membrane-binding region spans residues 1101-1173; sequence NSGWLKKFTE…EQSAPSQSDQ (73 aa). The oligomerization stretch occupies residues 1101 to 1239; the sequence is NSGWLKKFTE…SPGAGKSVAT (139 aa). Residues 1122–1126 form an RNA-binding region; sequence AIKIQ. An SF3 helicase domain is found at 1205 to 1361; sequence EKKMSNYIQF…SMYSQNGKIN (157 aa). Positions 1369, 1381, and 1386 each coordinate Zn(2+). The segment at 1369–1386 adopts a C4-type; degenerate zinc-finger fold; it reads CDEECCPVNFKKCCPLVC. The RNA-binding stretch occupies residues 1413-1420; the sequence is EYNHRHSV. Residues 1424–1429 are oligomerization; the sequence is LEALFQ. Residues 1496–1511 lie within the membrane without spanning it; sequence ALTTFVSVAGIIYIIY. Residues 1512–2185 are Cytoplasmic-facing; the sequence is KLFAGFQGAY…TLRRKWLDSF (674 aa). Residue Tyr1521 is modified to O-(5'-phospho-RNA)-tyrosine. One can recognise a Peptidase C3 domain in the interval 1541–1719; the sequence is GPAFEFAVAM…FSAALLRHYF (179 aa). Catalysis depends on for protease 3C activity residues His1580, Glu1611, and Cys1687. Residues 1950 to 2066 enclose the RdRp catalytic domain; sequence GHLIAFDYSG…SYPWPIDASL (117 aa). 2 residues coordinate Mg(2+): Asp1956 and Asp2052.

This sequence belongs to the picornaviruses polyprotein family. In terms of assembly, interacts with capsid protein VP1 and capsid protein VP3 to form heterotrimeric protomers. As to quaternary structure, interacts with capsid protein VP0, and capsid protein VP3 to form heterotrimeric protomers. Five protomers subsequently associate to form pentamers which serve as building blocks for the capsid. Interacts with capsid protein VP2, capsid protein VP3 and capsid protein VP4 following cleavage of capsid protein VP0. Interacts with capsid protein VP1 and capsid protein VP3 in the mature capsid. In terms of assembly, interacts with capsid protein VP0 and capsid protein VP1 to form heterotrimeric protomers. Five protomers subsequently associate to form pentamers which serve as building blocks for the capsid. Interacts with capsid protein VP4 in the mature capsid. Interacts with protein 2C; this interaction may be important for virion morphogenesis. As to quaternary structure, interacts with capsid protein VP1 and capsid protein VP3. Homodimer. In terms of assembly, homohexamer; forms a hexameric ring structure with 6-fold symmetry characteristic of AAA+ ATPases. Interacts (via N-terminus) with host RTN3 (via reticulon domain); this interaction is important for viral replication. Interacts with capsid protein VP3; this interaction may be important for virion morphogenesis. As to quaternary structure, interacts with protein 3CD. Homodimer. Interacts with host GBF1. Interacts (via GOLD domain) with host ACBD3 (via GOLD domain); this interaction allows the formation of a viral protein 3A/ACBD3 heterotetramer with a 2:2 stoichiometry, which will stimulate the recruitment of host PI4KB in order to synthesize PI4P at the viral RNA replication sites. In terms of assembly, interacts with RNA-directed RNA polymerase. As to quaternary structure, interacts with protein 3AB and with RNA-directed RNA polymerase. Interacts with Viral protein genome-linked and with protein 3CD. The cofactor is Mg(2+). In terms of processing, specific enzymatic cleavages in vivo by the viral proteases yield processing intermediates and the mature proteins. Myristoylation is required for the formation of pentamers during virus assembly. Further assembly of 12 pentamers and a molecule of genomic RNA generates the provirion. Post-translationally, during virion maturation, immature virions are rendered infectious following cleavage of VP0 into VP4 and VP2. This maturation seems to be an autocatalytic event triggered by the presence of RNA in the capsid and it is followed by a conformational change infectious virion. In terms of processing, myristoylation is required during RNA encapsidation and formation of the mature virus particle. VPg is uridylylated by the polymerase into VPg-pUpU. This acts as a nucleotide-peptide primer for the genomic RNA replication.

The protein localises to the virion. It is found in the host cytoplasm. The protein resides in the host cytoplasmic vesicle membrane. Its subcellular location is the host nucleus. The enzyme catalyses a ribonucleoside 5'-triphosphate + H2O = a ribonucleoside 5'-diphosphate + phosphate + H(+). It carries out the reaction Selective cleavage of Tyr-|-Gly bond in the picornavirus polyprotein.. It catalyses the reaction RNA(n) + a ribonucleoside 5'-triphosphate = RNA(n+1) + diphosphate. The catalysed reaction is Selective cleavage of Gln-|-Gly bond in the poliovirus polyprotein. In other picornavirus reactions Glu may be substituted for Gln, and Ser or Thr for Gly.. Its activity is regulated as follows. Replication or transcription is subject to high level of random mutations by the nucleotide analog ribavirin. Forms an icosahedral capsid of pseudo T=3 symmetry with capsid proteins VP2 and VP3. The capsid is 300 Angstroms in diameter, composed of 60 copies of each capsid protein and enclosing the viral positive strand RNA genome. Capsid protein VP1 mainly forms the vertices of the capsid. Capsid protein VP1 interacts with host cell receptor to provide virion attachment to target host cells. This attachment induces virion internalization. Tyrosine kinases are probably involved in the entry process. After binding to its receptor, the capsid undergoes conformational changes. Capsid protein VP1 N-terminus (that contains an amphipathic alpha-helix) and capsid protein VP4 are externalized. Together, they shape a pore in the host membrane through which viral genome is translocated to host cell cytoplasm. In terms of biological role, forms an icosahedral capsid of pseudo T=3 symmetry with capsid proteins VP2 and VP3. The capsid is 300 Angstroms in diameter, composed of 60 copies of each capsid protein and enclosing the viral positive strand RNA genome. Its function is as follows. Lies on the inner surface of the capsid shell. After binding to the host receptor, the capsid undergoes conformational changes. Capsid protein VP4 is released, Capsid protein VP1 N-terminus is externalized, and together, they shape a pore in the host membrane through which the viral genome is translocated into the host cell cytoplasm. Functionally, component of immature procapsids, which is cleaved into capsid proteins VP4 and VP2 after maturation. Allows the capsid to remain inactive before the maturation step. Cysteine protease that cleaves viral polyprotein and specific host proteins. It is responsible for the autocatalytic cleavage between the P1 and P2 regions, which is the first cleavage occurring in the polyprotein. Also cleaves the host translation initiation factor EIF4G1, in order to shut down the capped cellular mRNA translation. Inhibits the host nucleus-cytoplasm protein and RNA trafficking by cleaving host members of the nuclear pores. Counteracts stress granule formation probably by antagonizing its assembly or promoting its dissassembly. In terms of biological role, plays an essential role in the virus replication cycle by acting as a viroporin. Creates a pore in the host endoplasmic reticulum and as a consequence releases Ca2+ in the cytoplasm of infected cell. In turn, high levels of cytoplasmic calcium may trigger membrane trafficking and transport of viral ER-associated proteins to viroplasms, sites of viral genome replication. Its function is as follows. Induces and associates with structural rearrangements of intracellular membranes. Displays RNA-binding, nucleotide binding and NTPase activities. May play a role in virion morphogenesis and viral RNA encapsidation by interacting with the capsid protein VP3. Functionally, localizes the viral replication complex to the surface of membranous vesicles. Together with protein 3CD binds the Cis-Active RNA Element (CRE) which is involved in RNA synthesis initiation. Acts as a cofactor to stimulate the activity of 3D polymerase, maybe through a nucleid acid chaperone activity. Localizes the viral replication complex to the surface of membranous vesicles. It inhibits host cell endoplasmic reticulum-to-Golgi apparatus transport and causes the disassembly of the Golgi complex, possibly through GBF1 interaction. This would result in depletion of MHC, trail receptors and IFN receptors at the host cell surface. Plays an essential role in viral RNA replication by recruiting ACBD3 and PI4KB at the viral replication sites, thereby allowing the formation of the rearranged membranous structures where viral replication takes place. In terms of biological role, acts as a primer for viral RNA replication and remains covalently bound to viral genomic RNA. VPg is uridylylated prior to priming replication into VPg-pUpU. The oriI viral genomic sequence may act as a template for this. The VPg-pUpU is then used as primer on the genomic RNA poly(A) by the RNA-dependent RNA polymerase to replicate the viral genome. During genome replication, the VPg-RNA linkage is removed by the host TDP2, thereby accelerating replication. During the late stage of the replication cycle, host TDP2 is excluded from sites of viral RNA synthesis and encapsidation, allowing for the generation of progeny virions. Its function is as follows. Involved in the viral replication complex and viral polypeptide maturation. It exhibits protease activity with a specificity and catalytic efficiency that is different from protease 3C. Protein 3CD lacks polymerase activity. Protein 3CD binds to the 5'UTR of the viral genome. Functionally, major viral protease that mediates proteolytic processing of the polyprotein. Cleaves host EIF5B, contributing to host translation shutoff. Also cleaves host PABPC1, contributing to host translation shutoff. Cleaves host NLRP1, triggers host N-glycine-mediated degradation of the autoinhibitory NLRP1 N-terminal fragment. Replicates the viral genomic RNA on the surface of intracellular membranes. May form linear arrays of subunits that propagate along a strong head-to-tail interaction called interface-I. Covalently attaches UMP to a tyrosine of VPg, which is used to prime RNA synthesis. The positive stranded RNA genome is first replicated at virus induced membranous vesicles, creating a dsRNA genomic replication form. This dsRNA is then used as template to synthesize positive stranded RNA genomes. ss(+)RNA genomes are either translated, replicated or encapsidated. In Swine vesicular disease virus (strain H/3 '76) (SVDV), this protein is Genome polyprotein.